A 340-amino-acid chain; its full sequence is Adenosine kinase (340 aa).

The active site involves D293.

This sequence belongs to the carbohydrate kinase PfkB family. As to quaternary structure, monomer. It depends on Mg(2+) as a cofactor.

The enzyme catalyses adenosine + ATP = AMP + ADP + H(+). It participates in purine metabolism; AMP biosynthesis via salvage pathway; AMP from adenosine: step 1/1. Its function is as follows. ATP dependent phosphorylation of adenosine and other related nucleoside analogs to monophosphate derivatives. This is Adenosine kinase (adk) from Dictyostelium discoideum (Social amoeba).